A 231-amino-acid polypeptide reads, in one-letter code: Chlorophyll a-b binding protein 1B-20, chloroplastic (231 aa).

The tract at residues 1 to 25 is disordered; sequence RIQAYRFRTRVPPSPAASGSPRSTR. A chloroplast-targeting transit peptide spans 1-31; that stretch reads RIQAYRFRTRVPPSPAASGSPRSTRRDVAVQ. Trp-36 is a chlorophyll b binding site. Phe-56 provides a ligand contact to chlorophyll a. Residues Arg-80, Ser-118, Glu-133, and Arg-136 each contribute to the chlorophyll b site. Lys-182, Glu-183, Asn-186, Arg-188, Gln-200, and His-215 together coordinate chlorophyll a. A helical membrane pass occupies residues 183 to 199; that stretch reads ELANGRLAMLAFLGFLV.

This sequence belongs to the light-harvesting chlorophyll a/b-binding (LHC) protein family. The LHC complex consists of chlorophyll a-b binding proteins. Binds at least 14 chlorophylls (8 Chl-a and 6 Chl-b) and carotenoids such as lutein and neoxanthin. is required as a cofactor. Photoregulated by reversible phosphorylation of its threonine residues.

The protein localises to the plastid. It localises to the chloroplast thylakoid membrane. The light-harvesting complex (LHC) functions as a light receptor, it captures and delivers excitation energy to photosystems with which it is closely associated. This chain is Chlorophyll a-b binding protein 1B-20, chloroplastic (LHC Ib-20), found in Hordeum vulgare (Barley).